The primary structure comprises 344 residues: 4-hydroxy-3-methylbut-2-en-1-yl diphosphate synthase (flavodoxin) (344 aa).

Residues cysteine 253, cysteine 256, cysteine 288, and glutamate 295 each coordinate [4Fe-4S] cluster.

Belongs to the IspG family. Requires [4Fe-4S] cluster as cofactor.

The enzyme catalyses (2E)-4-hydroxy-3-methylbut-2-enyl diphosphate + oxidized [flavodoxin] + H2O + 2 H(+) = 2-C-methyl-D-erythritol 2,4-cyclic diphosphate + reduced [flavodoxin]. It participates in isoprenoid biosynthesis; isopentenyl diphosphate biosynthesis via DXP pathway; isopentenyl diphosphate from 1-deoxy-D-xylulose 5-phosphate: step 5/6. Functionally, converts 2C-methyl-D-erythritol 2,4-cyclodiphosphate (ME-2,4cPP) into 1-hydroxy-2-methyl-2-(E)-butenyl 4-diphosphate. This Thermotoga petrophila (strain ATCC BAA-488 / DSM 13995 / JCM 10881 / RKU-1) protein is 4-hydroxy-3-methylbut-2-en-1-yl diphosphate synthase (flavodoxin).